Here is a 236-residue protein sequence, read N- to C-terminus: DNA repair and recombination protein RadB (236 aa).

This sequence belongs to the eukaryotic RecA-like protein family. RadB subfamily.

Involved in DNA repair and in homologous recombination. May regulate the cleavage reactions of the branch-structured DNA. Has a very weak ATPase activity that is not stimulated by DNA. Binds DNA but does not promote DNA strands exchange. This chain is DNA repair and recombination protein RadB, found in Halobacterium salinarum (strain ATCC 29341 / DSM 671 / R1).